Here is a 64-residue protein sequence, read N- to C-terminus: Large ribosomal subunit protein bL35 (64 aa).

Disordered regions lie at residues 1–22 (MPKA…TGKI) and 34–64 (EHKP…LLNG). Residues 34–46 (EHKPTTRTRRLEG) show a composition bias toward basic and acidic residues. Residues 50 to 64 (VSANDTKRVNSLLNG) are compositionally biased toward polar residues.

The protein belongs to the bacterial ribosomal protein bL35 family.

The protein is Large ribosomal subunit protein bL35 of Mycolicibacterium paratuberculosis (strain ATCC BAA-968 / K-10) (Mycobacterium paratuberculosis).